We begin with the raw amino-acid sequence, 533 residues long: DELLA protein 2 (533 aa).

Residues 1–12 are compositionally biased toward basic and acidic residues; that stretch reads MKREHKLEHEDM. The disordered stretch occupies residues 1 to 24; the sequence is MKREHKLEHEDMSSGSGKSGVCWE. Positions 31–35 match the DELLA motif motif; the sequence is DELLA. Residues 157-522 form the GRAS domain; the sequence is VETQEKGIRL…RPLIATSAWK (366 aa). Residues 164–218 form a leucine repeat I (LRI) region; sequence IRLVHSLMACAEAVEQNNLKMAEALVKQIGYLAVSQEGAMRKVATYFAEGLARRI. Positions 166–203 are required for possible homodimerization; it reads LVHSLMACAEAVEQNNLKMAEALVKQIGYLAVSQEGAM. The LxCxE motif; degenerate signature appears at 171 to 175; the sequence is MACAE. The segment at 232 to 297 is VHIID; the sequence is QIHFYETCPN…GGPPAFRLTG (66 aa). Residues 263–267 carry the VHIID motif; it reads VHVID. A leucine repeat II (LRII) region spans residues 311–343; the sequence is QVGWRLAQFAQTIHVQFEYRGFVANSLADLDAS. The segment at 355–443 is PFYRE; that stretch reads VAVNSVFELH…EVYLGKQICN (89 aa). Positions 363–367 match the LXXLL motif; degenerate motif; sequence LHKLN. The interval 446 to 522 is SAW; sequence ACEGTDRVER…RPLIATSAWK (77 aa).

This sequence belongs to the GRAS family. DELLA subfamily. May be a homodimer. Ubiquitinated. Upon GA application it is ubiquitinated, leading to its subsequent degradation.

Its subcellular location is the nucleus. Probable transcriptional regulator that acts as a repressor of the gibberellin (GA) signaling pathway. Probably acts by participating in large multiprotein complexes that repress transcription of GA-inducible genes. Upon GA application, it is degraded by the proteasome, allowing the GA signaling pathway. Together with DELLA1, required to enable arbuscule development during arbuscular mycorrhizal (AM) symbiosis with AM fungi (e.g. Glomus versiforme) via the regulation of RAM1 which, in turn, regulates various AM genes (e.g. NSP1, NSP2, PT4, LEC5, RAM2, EXO70I, STR and RAD1). The sequence is that of DELLA protein 2 from Medicago truncatula (Barrel medic).